The sequence spans 172 residues: Endoribonuclease YbeY (172 aa).

Zn(2+) is bound by residues histidine 136, histidine 140, and histidine 146.

Belongs to the endoribonuclease YbeY family. Requires Zn(2+) as cofactor.

It localises to the cytoplasm. In terms of biological role, single strand-specific metallo-endoribonuclease involved in late-stage 70S ribosome quality control and in maturation of the 3' terminus of the 16S rRNA. This Rickettsia canadensis (strain McKiel) protein is Endoribonuclease YbeY.